Consider the following 199-residue polypeptide: Large ribosomal subunit protein uL4 (199 aa).

The protein belongs to the universal ribosomal protein uL4 family. In terms of assembly, part of the 50S ribosomal subunit.

In terms of biological role, one of the primary rRNA binding proteins, this protein initially binds near the 5'-end of the 23S rRNA. It is important during the early stages of 50S assembly. It makes multiple contacts with different domains of the 23S rRNA in the assembled 50S subunit and ribosome. Forms part of the polypeptide exit tunnel. The polypeptide is Large ribosomal subunit protein uL4 (Aquifex pyrophilus).